The sequence spans 467 residues: MSRPLERQHPVHFIGVGGIGMSALAKILVDRGHPVSGSDPRVTPTSHQLMQLGVTVVHEQTEATIETLLSNGRRPIVVVSTAIPTSNPELRRARDAGLEIWHRSDLLAALIDQQASIAVAGSHGKTTTSTLTTTLLMEAGEDPTAIIGGIVPCLGSNGHAGHGRLLVAEADESDGSLVKFRPQLGLITNLELDHTDHYDGLDDLINTMRLFADGCDQVLANRDCPILKEHIQPDAWWSVTSANGVDFAALPLQLDGDRCLARFYENGAPVGDFMLPLPGLHNLSNAAGALAACRMEGIPFERLVNGLTALKPPGRRFDLRGTWEGRYIVDDYAHHPSEVKATLAMAQLMVSSGRSPFPSPPQRLLAVFQPHRFSRTQEFLESFASALQNCDSLLLAPVYSAGEEPLKGVCSQTLADRIQELKPDLEIAVADNLDHLTQLVRTRSQREDLVLAMGAGDVNGLWPRLSA.

121–127 (GSHGKTT) serves as a coordination point for ATP.

Belongs to the MurCDEF family.

It is found in the cytoplasm. It carries out the reaction UDP-N-acetyl-alpha-D-muramate + L-alanine + ATP = UDP-N-acetyl-alpha-D-muramoyl-L-alanine + ADP + phosphate + H(+). Its pathway is cell wall biogenesis; peptidoglycan biosynthesis. Its function is as follows. Cell wall formation. The polypeptide is UDP-N-acetylmuramate--L-alanine ligase (Parasynechococcus marenigrum (strain WH8102)).